We begin with the raw amino-acid sequence, 218 residues long: Large ribosomal subunit protein uL3 (218 aa).

Belongs to the universal ribosomal protein uL3 family. In terms of assembly, part of the 50S ribosomal subunit. Forms a cluster with proteins L14 and L19.

One of the primary rRNA binding proteins, it binds directly near the 3'-end of the 23S rRNA, where it nucleates assembly of the 50S subunit. This Corynebacterium efficiens (strain DSM 44549 / YS-314 / AJ 12310 / JCM 11189 / NBRC 100395) protein is Large ribosomal subunit protein uL3.